A 148-amino-acid polypeptide reads, in one-letter code: Gametocyte-specific factor 1-like (148 aa).

2 CHHC U11-48K-type zinc fingers span residues 6–33 and 40–67; these read FEIC…RRKN and MATC…VNRS. Residues cysteine 9, histidine 15, histidine 25, cysteine 29, cysteine 43, histidine 49, histidine 59, and cysteine 63 each contribute to the Zn(2+) site. The segment at 67 to 99 is disordered; that stretch reads SAVEEEDTENPLKVSPPSSEQNDDTQQVSPCLP. Over residues 82-95 the composition is skewed to polar residues; the sequence is PPSSEQNDDTQQVS.

This sequence belongs to the UPF0224 (FAM112) family.

The protein is Gametocyte-specific factor 1-like (GTSF1L) of Homo sapiens (Human).